A 97-amino-acid chain; its full sequence is Aspartyl/glutamyl-tRNA(Asn/Gln) amidotransferase subunit C (97 aa).

Belongs to the GatC family. Heterotrimer of A, B and C subunits.

It carries out the reaction L-glutamyl-tRNA(Gln) + L-glutamine + ATP + H2O = L-glutaminyl-tRNA(Gln) + L-glutamate + ADP + phosphate + H(+). It catalyses the reaction L-aspartyl-tRNA(Asn) + L-glutamine + ATP + H2O = L-asparaginyl-tRNA(Asn) + L-glutamate + ADP + phosphate + 2 H(+). Its function is as follows. Allows the formation of correctly charged Asn-tRNA(Asn) or Gln-tRNA(Gln) through the transamidation of misacylated Asp-tRNA(Asn) or Glu-tRNA(Gln) in organisms which lack either or both of asparaginyl-tRNA or glutaminyl-tRNA synthetases. The reaction takes place in the presence of glutamine and ATP through an activated phospho-Asp-tRNA(Asn) or phospho-Glu-tRNA(Gln). In Synechococcus sp. (strain JA-3-3Ab) (Cyanobacteria bacterium Yellowstone A-Prime), this protein is Aspartyl/glutamyl-tRNA(Asn/Gln) amidotransferase subunit C.